A 303-amino-acid polypeptide reads, in one-letter code: Porphobilinogen deaminase (303 aa).

The residue at position 240 (Cys240) is an S-(dipyrrolylmethanemethyl)cysteine.

This sequence belongs to the HMBS family. In terms of assembly, monomer. Requires dipyrromethane as cofactor.

The enzyme catalyses 4 porphobilinogen + H2O = hydroxymethylbilane + 4 NH4(+). It participates in porphyrin-containing compound metabolism; protoporphyrin-IX biosynthesis; coproporphyrinogen-III from 5-aminolevulinate: step 2/4. Functionally, tetrapolymerization of the monopyrrole PBG into the hydroxymethylbilane pre-uroporphyrinogen in several discrete steps. In Stenotrophomonas maltophilia (strain K279a), this protein is Porphobilinogen deaminase.